We begin with the raw amino-acid sequence, 502 residues long: ATP synthase subunit alpha (502 aa).

Positions 115–135 (VDGLGPINTTNTRPIESPAPG) are disordered. Residue 169–176 (GDRQTGKT) coordinates ATP.

This sequence belongs to the ATPase alpha/beta chains family. F-type ATPases have 2 components, CF(1) - the catalytic core - and CF(0) - the membrane proton channel. CF(1) has five subunits: alpha(3), beta(3), gamma(1), delta(1), epsilon(1). CF(0) has three main subunits: a(1), b(2) and c(9-12). The alpha and beta chains form an alternating ring which encloses part of the gamma chain. CF(1) is attached to CF(0) by a central stalk formed by the gamma and epsilon chains, while a peripheral stalk is formed by the delta and b chains.

Its subcellular location is the cell membrane. The catalysed reaction is ATP + H2O + 4 H(+)(in) = ADP + phosphate + 5 H(+)(out). In terms of biological role, produces ATP from ADP in the presence of a proton gradient across the membrane. The alpha chain is a regulatory subunit. This Bacillus cereus (strain B4264) protein is ATP synthase subunit alpha.